Consider the following 329-residue polypeptide: DNA-directed RNA polymerase subunit alpha (329 aa).

The segment at 1 to 233 is alpha N-terminal domain (alpha-NTD); sequence MVREKVKVST…NLFIPFLHVE (233 aa). The interval 266-329 is alpha C-terminal domain (alpha-CTD); sequence TKELAFQYIF…KKILDILEKK (64 aa).

The protein belongs to the RNA polymerase alpha chain family. In plastids the minimal PEP RNA polymerase catalytic core is composed of four subunits: alpha, beta, beta', and beta''. When a (nuclear-encoded) sigma factor is associated with the core the holoenzyme is formed, which can initiate transcription.

The protein localises to the plastid. It is found in the chloroplast. It carries out the reaction RNA(n) + a ribonucleoside 5'-triphosphate = RNA(n+1) + diphosphate. DNA-dependent RNA polymerase catalyzes the transcription of DNA into RNA using the four ribonucleoside triphosphates as substrates. In Arabidopsis thaliana (Mouse-ear cress), this protein is DNA-directed RNA polymerase subunit alpha.